We begin with the raw amino-acid sequence, 311 residues long: Halocin-S8 (311 aa).

Propeptides lie at residues 1–230 and 267–311; these read MSDK…IQLQ and TVAC…TSFW.

It localises to the secreted. Has antibacterial activity against the haloarchaeons H.salinarium NRC817, Halobacterium GRB and H.gibbonsii. The sequence is that of Halocin-S8 (halS8) from Haloarchaeon S8a.